A 328-amino-acid polypeptide reads, in one-letter code: Aryl-hydrocarbon-interacting protein-like 1 (328 aa).

The PPIase FKBP-type domain occupies 53 to 145 (KQVGQPMSII…DLDELQKEPQ (93 aa)). TPR repeat units follow at residues 178-211 (VPLL…LRNL), 230-263 (NTLI…HPGI), and 264-297 (VKAY…EPSM).

In terms of assembly, interacts with NUB1.

It is found in the cytoplasm. It localises to the nucleus. May be important in protein trafficking and/or protein folding and stabilization. The sequence is that of Aryl-hydrocarbon-interacting protein-like 1 (Aipl1) from Mus musculus (Mouse).